The chain runs to 196 residues: MISFVSGRVAAVTPDSVIVEVGGFGVQLLATPATIARARVGERARFATSLVVREDSLTLYGFADDDERTVFELLQTASGVGPRLALAMLGVHSPTALRAAVATEDVKALALVPGIGRKTAQRIILELKDRLGTPSTAAAESTSGWRDAVHAGLLNLGYTARQADEAIAAIAGELDDSAAVDTATALRLALATLKRP.

The domain I stretch occupies residues 1-63 (MISFVSGRVA…EDSLTLYGFA (63 aa)). The interval 64 to 136 (DDDERTVFEL…LKDRLGTPST (73 aa)) is domain II. Residues 136-140 (TAAAE) form a flexible linker region. The tract at residues 141–196 (STSGWRDAVHAGLLNLGYTARQADEAIAAIAGELDDSAAVDTATALRLALATLKRP) is domain III.

The protein belongs to the RuvA family. As to quaternary structure, homotetramer. Forms an RuvA(8)-RuvB(12)-Holliday junction (HJ) complex. HJ DNA is sandwiched between 2 RuvA tetramers; dsDNA enters through RuvA and exits via RuvB. An RuvB hexamer assembles on each DNA strand where it exits the tetramer. Each RuvB hexamer is contacted by two RuvA subunits (via domain III) on 2 adjacent RuvB subunits; this complex drives branch migration. In the full resolvosome a probable DNA-RuvA(4)-RuvB(12)-RuvC(2) complex forms which resolves the HJ.

It is found in the cytoplasm. Its function is as follows. The RuvA-RuvB-RuvC complex processes Holliday junction (HJ) DNA during genetic recombination and DNA repair, while the RuvA-RuvB complex plays an important role in the rescue of blocked DNA replication forks via replication fork reversal (RFR). RuvA specifically binds to HJ cruciform DNA, conferring on it an open structure. The RuvB hexamer acts as an ATP-dependent pump, pulling dsDNA into and through the RuvAB complex. HJ branch migration allows RuvC to scan DNA until it finds its consensus sequence, where it cleaves and resolves the cruciform DNA. The polypeptide is Holliday junction branch migration complex subunit RuvA (Acidothermus cellulolyticus (strain ATCC 43068 / DSM 8971 / 11B)).